A 112-amino-acid polypeptide reads, in one-letter code: Cytochrome c3 (112 aa).

Heme c contacts are provided by histidine 26, histidine 29, cysteine 34, cysteine 37, histidine 38, histidine 39, cysteine 49, cysteine 54, histidine 55, histidine 73, cysteine 83, cysteine 86, histidine 87, cysteine 104, cysteine 109, and histidine 110.

It depends on heme as a cofactor.

In terms of biological role, participates in sulfate respiration coupled with phosphorylation by transferring electrons from the enzyme dehydrogenase to ferredoxin. The chain is Cytochrome c3 from Megalodesulfovibrio gigas (strain ATCC 19364 / DSM 1382 / NCIMB 9332 / VKM B-1759) (Desulfovibrio gigas).